We begin with the raw amino-acid sequence, 76 residues long: Small ribosomal subunit protein bS18 (76 aa).

Belongs to the bacterial ribosomal protein bS18 family. Part of the 30S ribosomal subunit. Forms a tight heterodimer with protein bS6.

Its function is as follows. Binds as a heterodimer with protein bS6 to the central domain of the 16S rRNA, where it helps stabilize the platform of the 30S subunit. The sequence is that of Small ribosomal subunit protein bS18 from Methylococcus capsulatus (strain ATCC 33009 / NCIMB 11132 / Bath).